The following is a 227-amino-acid chain: Guanylate kinase (227 aa).

A Guanylate kinase-like domain is found at 21 to 199; that stretch reads GNLFMVVAPS…ALAELECIVA (179 aa). 28-35 is a binding site for ATP; it reads APSGAGKS.

This sequence belongs to the guanylate kinase family.

The protein localises to the cytoplasm. The enzyme catalyses GMP + ATP = GDP + ADP. Essential for recycling GMP and indirectly, cGMP. This is Guanylate kinase from Burkholderia orbicola (strain AU 1054).